A 378-amino-acid polypeptide reads, in one-letter code: UDP-4-amino-4-deoxy-L-arabinose--oxoglutarate aminotransferase (378 aa).

Residue K182 is modified to N6-(pyridoxal phosphate)lysine.

It belongs to the DegT/DnrJ/EryC1 family. ArnB subfamily. In terms of assembly, homodimer. The cofactor is pyridoxal 5'-phosphate.

The enzyme catalyses UDP-4-amino-4-deoxy-beta-L-arabinose + 2-oxoglutarate = UDP-beta-L-threo-pentopyranos-4-ulose + L-glutamate. The protein operates within nucleotide-sugar biosynthesis; UDP-4-deoxy-4-formamido-beta-L-arabinose biosynthesis; UDP-4-deoxy-4-formamido-beta-L-arabinose from UDP-alpha-D-glucuronate: step 2/3. It participates in bacterial outer membrane biogenesis; lipopolysaccharide biosynthesis. Functionally, catalyzes the conversion of UDP-4-keto-arabinose (UDP-Ara4O) to UDP-4-amino-4-deoxy-L-arabinose (UDP-L-Ara4N). The modified arabinose is attached to lipid A and is required for resistance to polymyxin and cationic antimicrobial peptides. The polypeptide is UDP-4-amino-4-deoxy-L-arabinose--oxoglutarate aminotransferase (Aeromonas hydrophila subsp. hydrophila (strain ATCC 7966 / DSM 30187 / BCRC 13018 / CCUG 14551 / JCM 1027 / KCTC 2358 / NCIMB 9240 / NCTC 8049)).